The chain runs to 119 residues: Large ribosomal subunit protein bL20 (119 aa).

The protein belongs to the bacterial ribosomal protein bL20 family.

Binds directly to 23S ribosomal RNA and is necessary for the in vitro assembly process of the 50S ribosomal subunit. It is not involved in the protein synthesizing functions of that subunit. This chain is Large ribosomal subunit protein bL20, found in Dehalococcoides mccartyi (strain ATCC BAA-2266 / KCTC 15142 / 195) (Dehalococcoides ethenogenes (strain 195)).